The chain runs to 336 residues: HTH-type transcriptional regulator CdhR (336 aa).

The region spanning V213 to V311 is the HTH araC/xylS-type domain. 2 DNA-binding regions (H-T-H motif) span residues L230–L251 and V278–F301. The segment at P305–G336 is disordered.

Functionally, induces the transcription of the PA5384-PA5388 operon in response to carnitine. This operon is involved in the degradation of L-carnitine, and allows P.aeruginosa to grow on L-carnitine as the sole source of carbon and nitrogen. This is HTH-type transcriptional regulator CdhR (cdhR) from Pseudomonas aeruginosa (strain ATCC 15692 / DSM 22644 / CIP 104116 / JCM 14847 / LMG 12228 / 1C / PRS 101 / PAO1).